We begin with the raw amino-acid sequence, 48 residues long: Fimbrial assembly protein, serogroup E2 (48 aa).

The polypeptide is Fimbrial assembly protein, serogroup E2 (fimB) (Dichelobacter nodosus (Bacteroides nodosus)).